Here is a 304-residue protein sequence, read N- to C-terminus: Acetyl-coenzyme A carboxylase carboxyl transferase subunit beta (304 aa).

Positions 29 to 298 constitute a CoA carboxyltransferase N-terminal domain; it reads LWSKCESCGA…ASDVSPAAVP (270 aa). Zn(2+) contacts are provided by C33, C36, C52, and C55. A C4-type zinc finger spans residues 33-55; it reads CESCGALTYTKDLRANQMVCLEC.

Belongs to the AccD/PCCB family. As to quaternary structure, acetyl-CoA carboxylase is a heterohexamer composed of biotin carboxyl carrier protein (AccB), biotin carboxylase (AccC) and two subunits each of ACCase subunit alpha (AccA) and ACCase subunit beta (AccD). Zn(2+) serves as cofactor.

Its subcellular location is the cytoplasm. The catalysed reaction is N(6)-carboxybiotinyl-L-lysyl-[protein] + acetyl-CoA = N(6)-biotinyl-L-lysyl-[protein] + malonyl-CoA. Its pathway is lipid metabolism; malonyl-CoA biosynthesis; malonyl-CoA from acetyl-CoA: step 1/1. In terms of biological role, component of the acetyl coenzyme A carboxylase (ACC) complex. Biotin carboxylase (BC) catalyzes the carboxylation of biotin on its carrier protein (BCCP) and then the CO(2) group is transferred by the transcarboxylase to acetyl-CoA to form malonyl-CoA. The sequence is that of Acetyl-coenzyme A carboxylase carboxyl transferase subunit beta from Acaryochloris marina (strain MBIC 11017).